Consider the following 96-residue polypeptide: UPF0235 protein YE3436 (96 aa).

This sequence belongs to the UPF0235 family.

This Yersinia enterocolitica serotype O:8 / biotype 1B (strain NCTC 13174 / 8081) protein is UPF0235 protein YE3436.